The following is a 1222-amino-acid chain: DNA-directed RNA polymerase II subunit RPB2 (1222 aa).

D835 contributes to the Mg(2+) binding site. Positions 1161, 1164, 1180, and 1183 each coordinate Zn(2+). Residues C1161–C1183 form a C4-type zinc finger.

It belongs to the RNA polymerase beta chain family. In terms of assembly, component of the RNA polymerase II (Pol II) complex consisting of 12 subunits.

It localises to the nucleus. The enzyme catalyses RNA(n) + a ribonucleoside 5'-triphosphate = RNA(n+1) + diphosphate. Its function is as follows. DNA-dependent RNA polymerase catalyzes the transcription of DNA into RNA using the four ribonucleoside triphosphates as substrates. Second largest component of RNA polymerase II which synthesizes mRNA precursors and many functional non-coding RNAs. Proposed to contribute to the polymerase catalytic activity and forms the polymerase active center together with the largest subunit. Pol II is the central component of the basal RNA polymerase II transcription machinery. It is composed of mobile elements that move relative to each other. RPB2 is part of the core element with the central large cleft, the clamp element that moves to open and close the cleft and the jaws that are thought to grab the incoming DNA template. In Eremothecium gossypii (strain ATCC 10895 / CBS 109.51 / FGSC 9923 / NRRL Y-1056) (Yeast), this protein is DNA-directed RNA polymerase II subunit RPB2 (RPB2).